A 543-amino-acid chain; its full sequence is Serine/threonine-protein kinase PkaA (543 aa).

Positions 8 to 276 (YLLEEPLGRG…ENLARGLRVV (269 aa)) constitute a Protein kinase domain. ATP contacts are provided by residues 14–22 (LGRGATGTV) and Lys48. The Proton acceptor role is filled by Asp142. Residues 303–480 (PAPAQVPGAP…RQRSANPMRI (178 aa)) form a disordered region. The segment covering 352 to 361 (VMPPVPPGQP) has biased composition (pro residues). Composition is skewed to low complexity over residues 407 to 420 (RQVS…RQAP) and 428 to 451 (PGYG…QPQR). A compositionally biased stretch (pro residues) spans 452–461 (YAPPPAPEPQ).

Belongs to the protein kinase superfamily. Ser/Thr protein kinase family. Post-translationally, autophosphorylated mainly at Thr and slightly at Ser.

The catalysed reaction is L-seryl-[protein] + ATP = O-phospho-L-seryl-[protein] + ADP + H(+). The enzyme catalyses L-threonyl-[protein] + ATP = O-phospho-L-threonyl-[protein] + ADP + H(+). This is Serine/threonine-protein kinase PkaA (pkaA) from Streptomyces coelicolor (strain ATCC BAA-471 / A3(2) / M145).